Reading from the N-terminus, the 435-residue chain is MTLTGCVDYYEIIAGTKVAVCRNAIDNKTVATAIAATRTVNGNDDPFVVMNVSTIMAKVIQWQRTMPRVAPCYAVKCNDDKVLLRTLADLGMGFDCASKAEIEKVIGLVGPEKIVYANPCKTRGFIAHAEAAGVKRMTFDSVEELTKIKQNHADPSLILRISVSDPTAQCQLGIKFGCDPETVAPKLLRKAADMGMNVIGISFHVGSGCNEPATFRTALEYARGLFDLGISLGLSMTLLDIGGGFPGVDTAHISLDACAAVINPALEELFPLDSCPDVEVIAEPGRYFACAAVSVTTNVIASVKVPASRITEKADDVNRDGYMYYMNDGVYGSFNCKLFDHYQPRGMPLAEHDADEPRFPVCVWGPTCDGLDQVEESSVMPRLYEGDWLYYPDMGAYTSVAASTFNGFDKPKTYYFIDEATLGSIVRKADSAPRG.

At Lys-76 the chain carries N6-(pyridoxal phosphate)lysine. Pyridoxal 5'-phosphate contacts are provided by residues Ser-207, Gly-244, and 283-286 (EPGR). Substrate is bound at residue 339 to 340 (FD). Cys-368 acts as the Proton donor; shared with dimeric partner in catalysis. Substrate is bound at residue Asp-369. Tyr-397 contributes to the pyridoxal 5'-phosphate binding site.

This sequence belongs to the Orn/Lys/Arg decarboxylase class-II family. In terms of assembly, homodimer. Only the dimer is catalytically active, as the active sites are constructed of residues from both monomers. Pyridoxal 5'-phosphate is required as a cofactor.

The catalysed reaction is L-ornithine + H(+) = putrescine + CO2. Its pathway is amine and polyamine biosynthesis; putrescine biosynthesis via L-ornithine pathway; putrescine from L-ornithine: step 1/1. Its activity is regulated as follows. Inhibited by antizyme (AZ) in response to polyamine levels. AZ inhibits the assembly of the functional homodimer by binding to ODC monomers and targeting them for ubiquitin-independent proteolytic destruction by the 26S proteasome. Its function is as follows. Catalyzes the first and rate-limiting step of polyamine biosynthesis that converts ornithine into putrescine, which is the precursor for the polyamines, spermidine and spermine. Polyamines are essential for cell proliferation and are implicated in cellular processes, ranging from DNA replication to apoptosis. In Panagrellus redivivus (Microworm), this protein is Ornithine decarboxylase (ODC).